An 80-amino-acid chain; its full sequence is Probable antimicrobial peptide clone Con10 (80 aa).

The signal sequence occupies residues 1-24; it reads MQYKTKTFLVIFLAYLVVTNEAEA. Positions 56–80 are excised as a propeptide; the sequence is EIEDFFDPYQRELDLELERLLSQLQ.

The protein belongs to the non-disulfide-bridged peptide (NDBP) superfamily. Medium-length antimicrobial peptide (group 3) family. Expressed by the venom gland.

Its subcellular location is the secreted. It is found in the target cell membrane. Functionally, antimicrobial peptide. Has antifungal activity against all strains tested (MIC=12.5-200 uM). May act by disrupting the integrity of the bacterial cell membrane. The sequence is that of Probable antimicrobial peptide clone Con10 from Opisthacanthus cayaporum (South American scorpion).